A 587-amino-acid chain; its full sequence is Deoxynucleoside triphosphate triphosphohydrolase sahd-1 (587 aa).

The region spanning 92-262 is the HD domain; the sequence is RFVHSLGTFS…GHDVDKMDYL (171 aa). 4 residues coordinate Zn(2+): His95, His134, Asp135, and Asp257. The tract at residues 554–587 is disordered; that stretch reads EKFLTPRKRSPQDSPDEVSSSCSTAKRRLEFGSS. The residue at position 558 (Thr558) is a Phosphothreonine.

This sequence belongs to the SAMHD1 family. Homodimer. Homotetramer; in dGTP-bound form. Zn(2+) serves as cofactor.

It is found in the nucleus. The protein localises to the chromosome. It carries out the reaction a 2'-deoxyribonucleoside 5'-triphosphate + H2O = a 2'-deoxyribonucleoside + triphosphate + H(+). With respect to regulation, allosterically activated and regulated by GTP or dGTP. Allosteric activation promotes the formation of highly active homotetramers. Phosphorylation impairs homotetramerization, thereby inhibiting dNTPase activity. In terms of biological role, has deoxynucleoside triphosphate (dNTPase) activity. dNTPase activity acts as a regulator of DNA precursor pools by regulating dNTP pools. Phosphorylation acts as a switch to control dNTPase-dependent and -independent functions. This Caenorhabditis elegans protein is Deoxynucleoside triphosphate triphosphohydrolase sahd-1.